The sequence spans 152 residues: Large-conductance mechanosensitive channel (152 aa).

Helical transmembrane passes span 14 to 34 (VVDM…VKSL), 39 to 59 (LMPG…FLVI), and 85 to 105 (GLFI…FLVI).

The protein belongs to the MscL family. Homopentamer.

It is found in the cell inner membrane. Channel that opens in response to stretch forces in the membrane lipid bilayer. May participate in the regulation of osmotic pressure changes within the cell. This chain is Large-conductance mechanosensitive channel, found in Syntrophus aciditrophicus (strain SB).